Here is a 222-residue protein sequence, read N- to C-terminus: Small ribosomal subunit protein uS3 (222 aa).

Residues 39 to 108 form the KH type-2 domain; that stretch reads IRRHIKEKLY…TISLDIKEIK (70 aa).

Belongs to the universal ribosomal protein uS3 family. In terms of assembly, part of the 30S ribosomal subunit. Forms a tight complex with proteins S10 and S14.

In terms of biological role, binds the lower part of the 30S subunit head. Binds mRNA in the 70S ribosome, positioning it for translation. This is Small ribosomal subunit protein uS3 from Caldicellulosiruptor saccharolyticus (strain ATCC 43494 / DSM 8903 / Tp8T 6331).